The sequence spans 190 residues: Elongation factor P (190 aa).

Residue Lys-34 is modified to N6-(3,6-diaminohexanoyl)-5-hydroxylysine.

Belongs to the elongation factor P family. In terms of processing, may be beta-lysylated on the epsilon-amino group of Lys-34 by the combined action of EpmA and EpmB, and then hydroxylated on the C5 position of the same residue by EpmC (if this protein is present). Lysylation is critical for the stimulatory effect of EF-P on peptide-bond formation. The lysylation moiety may extend toward the peptidyltransferase center and stabilize the terminal 3-CCA end of the tRNA. Hydroxylation of the C5 position on Lys-34 may allow additional potential stabilizing hydrogen-bond interactions with the P-tRNA.

Its subcellular location is the cytoplasm. The protein operates within protein biosynthesis; polypeptide chain elongation. In terms of biological role, involved in peptide bond synthesis. Alleviates ribosome stalling that occurs when 3 or more consecutive Pro residues or the sequence PPG is present in a protein, possibly by augmenting the peptidyl transferase activity of the ribosome. Modification of Lys-34 is required for alleviation. In Hahella chejuensis (strain KCTC 2396), this protein is Elongation factor P.